Here is a 148-residue protein sequence, read N- to C-terminus: Ribonuclease pancreatic (148 aa).

The N-terminal stretch at 1-25 (MGLEKSLLLLPLLVLVLGCVQPSLG) is a signal peptide. Substrate-binding residues include lysine 32 and arginine 35. Catalysis depends on histidine 37, which acts as the Proton acceptor. 4 cysteine pairs are disulfide-bonded: cysteine 50-cysteine 108, cysteine 64-cysteine 119, cysteine 82-cysteine 134, and cysteine 89-cysteine 96. Residues 65-69 (KPVNT) and lysine 90 contribute to the substrate site. Histidine 143 acts as the Proton donor in catalysis.

The protein belongs to the pancreatic ribonuclease family. In terms of assembly, monomer. Interacts with and forms tight 1:1 complexes with RNH1. Dimerization of two such complexes may occur. Interaction with RNH1 inhibits this protein. In terms of tissue distribution, pancreas.

It is found in the secreted. It catalyses the reaction an [RNA] containing cytidine + H2O = an [RNA]-3'-cytidine-3'-phosphate + a 5'-hydroxy-ribonucleotide-3'-[RNA].. It carries out the reaction an [RNA] containing uridine + H2O = an [RNA]-3'-uridine-3'-phosphate + a 5'-hydroxy-ribonucleotide-3'-[RNA].. In terms of biological role, endonuclease that catalyzes the cleavage of RNA on the 3' side of pyrimidine nucleotides. Acts on single-stranded and double-stranded RNA. The protein is Ribonuclease pancreatic (RNASE1) of Gerbillus nigeriae (Nigerian gerbil).